Here is a 193-residue protein sequence, read N- to C-terminus: Probable molybdenum cofactor guanylyltransferase (193 aa).

Residues 9 to 11 (TAG), K21, D64, and D93 each bind GTP. D93 contributes to the Mg(2+) binding site.

It belongs to the MobA family. Requires Mg(2+) as cofactor.

Its subcellular location is the cytoplasm. It catalyses the reaction Mo-molybdopterin + GTP + H(+) = Mo-molybdopterin guanine dinucleotide + diphosphate. Transfers a GMP moiety from GTP to Mo-molybdopterin (Mo-MPT) cofactor (Moco or molybdenum cofactor) to form Mo-molybdopterin guanine dinucleotide (Mo-MGD) cofactor. The protein is Probable molybdenum cofactor guanylyltransferase of Deinococcus radiodurans (strain ATCC 13939 / DSM 20539 / JCM 16871 / CCUG 27074 / LMG 4051 / NBRC 15346 / NCIMB 9279 / VKM B-1422 / R1).